Here is an 809-residue protein sequence, read N- to C-terminus: Penicillin-binding protein 1A (809 aa).

Over 1–34 the chain is Cytoplasmic; it reads MSDNTKTNSRNKSVKRTKKVKKKKKFGFFKKLFT. A helical; Signal-anchor for type II membrane protein membrane pass occupies residues 35–55; the sequence is ILFCLFILLSVAASGVIFAIV. Over 56–809 the chain is Extracellular; sequence KTSPNLDING…PNNNTTNTNK (754 aa). The interval 74–251 is transglycosylase; sequence SQLYDDNNNP…PSAYYPFSQN (178 aa). The Proton donor; for transglycosylase activity role is filled by Glu113. The interval 381–664 is transpeptidase; it reads AAATLFDYHT…VAEIWGEIMK (284 aa). Residue Ser422 is the Acyl-ester intermediate; for transpeptidase activity of the active site. A disordered region spans residues 694–809; that stretch reads SPSNLSGDDS…PNNNTTNTNK (116 aa).

The protein in the N-terminal section; belongs to the glycosyltransferase 51 family. It in the C-terminal section; belongs to the transpeptidase family.

The protein localises to the cell membrane. The catalysed reaction is [GlcNAc-(1-&gt;4)-Mur2Ac(oyl-L-Ala-gamma-D-Glu-L-Lys-D-Ala-D-Ala)](n)-di-trans,octa-cis-undecaprenyl diphosphate + beta-D-GlcNAc-(1-&gt;4)-Mur2Ac(oyl-L-Ala-gamma-D-Glu-L-Lys-D-Ala-D-Ala)-di-trans,octa-cis-undecaprenyl diphosphate = [GlcNAc-(1-&gt;4)-Mur2Ac(oyl-L-Ala-gamma-D-Glu-L-Lys-D-Ala-D-Ala)](n+1)-di-trans,octa-cis-undecaprenyl diphosphate + di-trans,octa-cis-undecaprenyl diphosphate + H(+). It catalyses the reaction Preferential cleavage: (Ac)2-L-Lys-D-Ala-|-D-Ala. Also transpeptidation of peptidyl-alanyl moieties that are N-acyl substituents of D-alanine.. It functions in the pathway cell wall biogenesis; peptidoglycan biosynthesis. Its function is as follows. Cell wall formation. Synthesis of cross-linked peptidoglycan from the lipid intermediates. The enzyme has a penicillin-insensitive transglycosylase N-terminal domain (formation of linear glycan strands) and a penicillin-sensitive transpeptidase C-terminal domain (cross-linking of the peptide subunits). The sequence is that of Penicillin-binding protein 1A (pbpA) from Clostridium acetobutylicum (strain ATCC 824 / DSM 792 / JCM 1419 / IAM 19013 / LMG 5710 / NBRC 13948 / NRRL B-527 / VKM B-1787 / 2291 / W).